Consider the following 404-residue polypeptide: Neutral protease 2 homolog AFLA_065450 (404 aa).

The signal sequence occupies residues 1 to 19 (MRFISASSLLLALAPTLNA). Residues 20 to 185 (VPVEVAGSAQ…TQAVKILERR (166 aa)) constitute a propeptide that is removed on maturation. Disulfide bonds link C191/C263 and C270/C288. A Zn(2+)-binding site is contributed by H313. Residue E314 is part of the active site. The Zn(2+) site is built by H317 and D328.

This sequence belongs to the peptidase M35 family. Requires Zn(2+) as cofactor.

It is found in the secreted. It carries out the reaction Preferential cleavage of bonds with hydrophobic residues in P1'. Also 3-Asn-|-Gln-4 and 8-Gly-|-Ser-9 bonds in insulin B chain.. Functionally, secreted metalloproteinase that allows assimilation of proteinaceous substrates. Shows high activities on basic nuclear substrates such as histone and protamine. In Aspergillus flavus (strain ATCC 200026 / FGSC A1120 / IAM 13836 / NRRL 3357 / JCM 12722 / SRRC 167), this protein is Neutral protease 2 homolog AFLA_065450.